The chain runs to 739 residues: Glycine--tRNA ligase (739 aa).

Residues 1–36 constitute a mitochondrion transit peptide; it reads MPSPRPVLLRGARAALLLLLPPRLLARPSLLLRRSL. A Phosphoserine modification is found at serine 35. Residues 63 to 119 form the WHEP-TRS domain; the sequence is VLAPLRLAVRQQGDLVRKLKEDKAPQVDVDKAVAELKARKRVLEAKELALQPKDDIV. Lysine 204 carries the post-translational modification N6-acetyllysine. Glutamate 299 provides a ligand contact to glycine. ATP-binding positions include 331-333 and 342-343; these read RNE and RV. Residue glutamate 350 participates in glycine binding. A Phosphotyrosine modification is found at tyrosine 453. ATP is bound at residue 457–458; the sequence is EI. At lysine 501 the chain carries N6-acetyllysine. 576-578 contacts glycine; sequence EPS. Arginine 583 contacts ATP. Position 700 is a phosphoserine (serine 700). Threonine 736 carries the phosphothreonine modification.

Belongs to the class-II aminoacyl-tRNA synthetase family. In terms of assembly, homodimer. As to expression, widely expressed, including in brain and spinal cord. In terms of tissue distribution, expressed in brain, spinal cord, muscle, heart and spleen. Expressed in brain, spinal cord, muscle, heart, spleen and liver.

Its subcellular location is the cytoplasm. It is found in the cell projection. The protein resides in the axon. It localises to the secreted. The protein localises to the extracellular exosome. Its subcellular location is the mitochondrion. The enzyme catalyses tRNA(Gly) + glycine + ATP = glycyl-tRNA(Gly) + AMP + diphosphate. It catalyses the reaction 2 ATP + H(+) = P(1),P(4)-bis(5'-adenosyl) tetraphosphate + diphosphate. Its activity is regulated as follows. Ap4A synthesis is inhibited by tRNA, via the disruption of the second ATP-binding site by direct blocking and/or by tRNA-induced conformational change. Catalyzes the ATP-dependent ligation of glycine to the 3'-end of its cognate tRNA, via the formation of an aminoacyl-adenylate intermediate (Gly-AMP). Also produces diadenosine tetraphosphate (Ap4A), a universal pleiotropic signaling molecule needed for cell regulation pathways, by direct condensation of 2 ATPs. Thereby, may play a special role in Ap4A homeostasis. This Homo sapiens (Human) protein is Glycine--tRNA ligase.